The chain runs to 335 residues: 2-acylglycerol O-acyltransferase 2-B (335 aa).

2 helical membrane-spanning segments follow: residues 24-44 (WAVS…LLLF) and 104-124 (YIMG…NFCT). Asn-206 is a glycosylation site (N-linked (GlcNAc...) asparagine).

Belongs to the diacylglycerol acyltransferase family.

It localises to the endoplasmic reticulum membrane. It is found in the cytoplasm. Its subcellular location is the perinuclear region. The enzyme catalyses a 2-acylglycerol + an acyl-CoA = a 1,2-diacylglycerol + CoA. It catalyses the reaction a 2-acylglycerol + an acyl-CoA = a 1,2-diacyl-sn-glycerol + CoA. The catalysed reaction is a 2-acylglycerol + an acyl-CoA = a 2,3-diacyl-sn-glycerol + CoA. It carries out the reaction a 1-acylglycerol + an acyl-CoA = a 1,2-diacylglycerol + CoA. The enzyme catalyses a 1-acylglycerol + an acyl-CoA = a 1,3-diacylglycerol + CoA. It catalyses the reaction 1-O-alkylglycerol + an acyl-CoA = 1-O-alkyl-3-acylglycerol + CoA. The catalysed reaction is an acyl-CoA + a 1,2-diacyl-sn-glycerol = a triacyl-sn-glycerol + CoA. The protein operates within glycerolipid metabolism; triacylglycerol biosynthesis. Functionally, catalyzes the formation of diacylglycerol from 2-monoacylglycerol and fatty acyl-CoA. Its function is as follows. Involved in glycerolipid synthesis and lipid metabolism. Catalyzes the formation of diacylglycerol, the precursor of triacylglycerol, by transferring the acyl chain of a fatty acyl-CoA to a monoacylglycerol. Plays a central role in absorption of dietary fat in the small intestine by catalyzing the resynthesis of triacylglycerol in enterocytes. Has a preference toward monoacylglycerols containing unsaturated fatty acids in an order of C18:3 &gt; C18:2 &gt; C18:1 &gt; C18:0 at sn-2. Able to use 1-monoalkylglycerol (1-MAkG, 1-O-alkylglycerol) as an acyl acceptor for the synthesis of monoalkyl-monoacylglycerol (MAMAG, 1-O-alkyl-3-acylglycerol or 1-O-alkyl-2-acylglycerol) and subsequently, with lower efficiency, may add another acyl chain producing monoalkyl-diacylglycerol (MADAG, 1-O-alkyl-2,3-diacylglycerol). Possesses weak but significant activity with diacylglycerol as substrate, producing triacylglycerol (triacyl-sn-glycerol). This Xenopus laevis (African clawed frog) protein is 2-acylglycerol O-acyltransferase 2-B (mogat2-b).